The following is a 148-amino-acid chain: Large ribosomal subunit protein uL13 (148 aa).

The protein belongs to the universal ribosomal protein uL13 family. Part of the 50S ribosomal subunit.

Its function is as follows. This protein is one of the early assembly proteins of the 50S ribosomal subunit, although it is not seen to bind rRNA by itself. It is important during the early stages of 50S assembly. This Ureaplasma urealyticum serovar 10 (strain ATCC 33699 / Western) protein is Large ribosomal subunit protein uL13.